A 106-amino-acid polypeptide reads, in one-letter code: uncharacterized protein (106 aa).

This is an uncharacterized protein from Mycoplasma pneumoniae (strain ATCC 29342 / M129 / Subtype 1) (Mycoplasmoides pneumoniae).